The primary structure comprises 957 residues: MNFAEREGSKRYCIQTKHVAILCAVVVGVGLIVGLAVGLTRSCDSSGDGGPGTAPAPSHLPSSTASPSGPPAQDQDICPASEDESGQWKNFRLPDFVNPVHYDLHVKPLLEEDTYTGTVSISINLSAPTRYLWLHLRETRITRLPELKRPSGDQVQVRRCFEYKKQEYVVVEAEEELTPSSGDGLYLLTMEFAGWLNGSLVGFYRTTYTENGQVKSIVATDHEPTDARKSFPCFDEPNKKATYTISITHPKEYGALSNMPVAKEESVDDKWTRTTFEKSVPMSTYLVCFAVHQFDSVKRISNSGKPLTIYVQPEQKHTAEYAANITKSVFDYFEEYFAMNYSLPKLDKIAIPDFGTGAMENWGLITYRETNLLYDPKESASSNQQRVATVVAHELVHQWFGNIVTMDWWEDLWLNEGFASFFEFLGVNHAETDWQMRDQMLLEDVLPVQEDDSLMSSHPIIVTVTTPDEITSVFDGISYSKGSSILRMLEDWIKPENFQKGCQMYLEKYQFKNAKTSDFWAALEEASRLPVKEVMDTWTRQMGYPVLNVNGVKNITQKRFLLDPRANPSQPPSDLGYTWNIPVKWTEDNITSSVLFNRSEKEGITLNSSNPSGNAFLKINPDHIGFYRVNYEVATWDSIATALSLNHKTFSSADRASLIDDAFALARAQLLDYKVALNLTKYLKREENFLPWQRVISAVTYIISMFEDDKELYPMIEEYFQGQVKPIADSLGWNDAGDHVTKLLRSSVLGFACKMGDREALNNASSLFEQWLNGTVSLPVNLRLLVYRYGMQNSGNEISWNYTLEQYQKTSLAQEKEKLLYGLASVKNVTLLSRYLDLLKDTNLIKTQDVFTVIRYISYNSYGKNMAWNWIQLNWDYLVNRYTLNNRNLGRIVTIAEPFNTELQLWQMESFFAKYPQAGAGEKPREQVLETVKNNIEWLKQHRNTIREWFFNLLESG.

Residues Met1–His18 are Cytoplasmic-facing. A helical; Signal-anchor for type II membrane protein transmembrane segment spans residues Val19–Leu39. At Thr40–Gly957 the chain is on the extracellular side. The segment at Asp44–Asp83 is disordered. A glycan (N-linked (GlcNAc...) asparagine; atypical) is linked at Asn98. Residues Asn124 and Asn197 are each glycosylated (N-linked (GlcNAc...) asparagine). Glu223 is a binding site for substrate. Residues Asn324 and Asn340 are each glycosylated (N-linked (GlcNAc...) asparagine). Substrate is bound at residue Gly357–Asn361. His393 lines the Zn(2+) pocket. The Proton acceptor role is filled by Glu394. Residues His397 and Glu416 each contribute to the Zn(2+) site. N-linked (GlcNAc...) asparagine glycans are attached at residues Asn554, Asn589, Asn597, Asn607, Asn678, Asn763, Asn773, Asn801, and Asn828. Arg887 is a binding site for substrate.

This sequence belongs to the peptidase M1 family. Homodimer; disulfide-linked. Requires Zn(2+) as cofactor. In terms of tissue distribution, expressed in choriocarcinoma cancer cell lines (at protein level). Expressed by epithelial cells of the proximal tubule cells and the glomerulus of the nephron. Also found in a variety of other tissues.

Its subcellular location is the cell membrane. It carries out the reaction Release of N-terminal glutamate (and to a lesser extent aspartate) from a peptide.. With respect to regulation, substrate specificity is modulated by calcium which enhances the enzymatic activity for cleavage of acidic residues while reducing its activity with basic residues. Inhibited by aminopeptidase inhibitors amastatin and bestatin. Functionally, regulates central hypertension through its calcium-modulated preference to cleave N-terminal acidic residues from peptides such as angiotensin II. The chain is Glutamyl aminopeptidase (ENPEP) from Homo sapiens (Human).